We begin with the raw amino-acid sequence, 206 residues long: Sec-independent protein translocase protein TatB (206 aa).

The helical transmembrane segment at Met-1 to Gly-21 threads the bilayer. Residues Glu-104–Ala-206 are disordered. Residues Pro-110–Pro-124 are compositionally biased toward low complexity. Positions Glu-125–Glu-138 are enriched in pro residues. 2 stretches are compositionally biased toward low complexity: residues Pro-139–Pro-151 and Ala-187–Pro-196.

The protein belongs to the TatB family. In terms of assembly, the Tat system comprises two distinct complexes: a TatABC complex, containing multiple copies of TatA, TatB and TatC subunits, and a separate TatA complex, containing only TatA subunits. Substrates initially bind to the TatABC complex, which probably triggers association of the separate TatA complex to form the active translocon.

The protein resides in the cell inner membrane. In terms of biological role, part of the twin-arginine translocation (Tat) system that transports large folded proteins containing a characteristic twin-arginine motif in their signal peptide across membranes. Together with TatC, TatB is part of a receptor directly interacting with Tat signal peptides. TatB may form an oligomeric binding site that transiently accommodates folded Tat precursor proteins before their translocation. This is Sec-independent protein translocase protein TatB from Rhizobium etli (strain ATCC 51251 / DSM 11541 / JCM 21823 / NBRC 15573 / CFN 42).